The following is a 145-amino-acid chain: Protein phosphatase 1 regulatory subunit 14D (145 aa).

Residues 1-14 (MLSSSPASCTSPSP) show a composition bias toward low complexity. Residues 1–59 (MLSSSPASCTSPSPDGENPCKKVHWASGRRRTSSTDSESKSHPDSSKIPRSRRPSRLTV) are disordered. Positions 21–25 (KKVHW) are interaction with protein phosphatase 1. Residues 21 to 32 (KKVHWASGRRRT) show a composition bias toward basic residues. Positions 37–47 (SESKSHPDSSK) are enriched in basic and acidic residues. Residue T58 is modified to Phosphothreonine.

The protein belongs to the PP1 inhibitor family. Phosphorylated on several residues. Detected in colon, intestine, kidney and brain cortex.

The protein resides in the cytoplasm. Inhibitor of PPP1CA. Has inhibitory activity only when phosphorylated, creating a molecular switch for regulating the phosphorylation status of PPP1CA substrates and smooth muscle contraction. The chain is Protein phosphatase 1 regulatory subunit 14D (PPP1R14D) from Homo sapiens (Human).